The primary structure comprises 456 residues: MSRISRLGACAEELAIAATTIAAFCKHHSNSGLPGDSIPPDAPQKVLQAKQSVITNSQKLEVLLAEPADFIQRLARENQLLACLQWLGEFQVLACIPIVDSVHYSDVADLACVPVDQLRRIARMTITAGFLQEPKPGYVAHSGLSAPFVKQPVLLDAAMFLSETLAPSALHMSLATKRHGRTHQTDQCAFNTAFNTKASFADSLGRRPRLQRQWPSFSRYAIADDEAGVEDVMTRLDWLSLGEATVVDVCAKTASLATALTSKYPSLRFVVQSEEQCQNHTWSRSLSATKLHNGLSTPPESDTGPAARAAKASERLELQQRALGSPQNVTNAAVYILRLGTASPFTSWHKLRAQATAELSAHADILRKEHGSRLILVTRTLPKPGEVETTVEAMARFRDLTLMQLANVRELETSEVVELLNSVHIEGGCLVLTNELRTRNSGMIAFEATYQPQLLG.

Positions leucine 74–glycine 143 constitute an HTH iclR-type domain. Residues tyrosine 104–arginine 123 constitute a DNA-binding region (H-T-H motif). Residues lysine 290–glutamate 300 are compositionally biased toward polar residues. The segment at lysine 290–glutamate 314 is disordered.

It localises to the nucleus. In terms of biological role, transcription coactivator involved in regulation of the dothistromin biosynthesis gene cluster with aflR. In Dothistroma septosporum (strain NZE10 / CBS 128990) (Red band needle blight fungus), this protein is Dothistromin biosynthesis regulatory protein aflJ.